The sequence spans 299 residues: Apolipoprotein E (299 aa).

The first 18 residues, 1-18 (MKALWAVLVVTLLAGCRA), serve as a signal peptide directing secretion. A run of 8 repeats spans residues 74–95 (VLMEDTMKEVKAYKNELEEELG), 96–117 (PVAEDTKARLSKELQGAQARLR), 118–139 (ADMEEVRNRLAHYSEEMQVMLG), 140–161 (QSPDELRARLGSHLRKLRKRLL), 162–183 (RDAEDLQKRLAVYKAGAREGAE), 184–205 (RGVSAIRERLGSLVEQSRVRAA), 206–223 (LTGQPLRERAQAWGERLR), and 224–245 (GRLEEVGGRARDRLDEVREQME). Residues 74–245 (VLMEDTMKEV…RLDEVREQME (172 aa)) form an 8 X 22 AA approximate tandem repeats region. Residues 152–162 (HLRKLRKRLLR) form an LDL and other lipoprotein receptors binding region. 156 to 159 (LRKR) lines the heparin pocket. Residues 204–273 (AALTGQPLRE…GWFEPMMEDM (70 aa)) form a lipid-binding and lipoprotein association region. Residue 219–226 (GERLRGRL) participates in heparin binding. The segment at 261 to 273 (RLKGWFEPMMEDM) is specificity for association with VLDL.

Belongs to the apolipoprotein A1/A4/E family. As to quaternary structure, homotetramer. May interact with ABCA1; functionally associated with ABCA1 in the biogenesis of HDLs. May interact with APP/A4 amyloid-beta peptide; the interaction is extremely stable in vitro but its physiological significance is unclear. May interact with MAPT. May interact with MAP2. In the cerebrospinal fluid, interacts with secreted SORL1. Interacts with PMEL; this allows the loading of PMEL luminal fragment on ILVs to induce fibril nucleation. Post-translationally, APOE exists as multiple glycosylated and sialylated glycoforms within cells and in plasma. The extent of glycosylation and sialylation are tissue and context specific. Glycated in plasma VLDL. In terms of processing, phosphorylated by FAM20C in the extracellular medium.

The protein localises to the secreted. The protein resides in the extracellular space. It localises to the extracellular matrix. Its subcellular location is the extracellular vesicle. It is found in the endosome. The protein localises to the multivesicular body. Its function is as follows. APOE is an apolipoprotein, a protein associating with lipid particles, that mainly functions in lipoprotein-mediated lipid transport between organs via the plasma and interstitial fluids. APOE is a core component of plasma lipoproteins and is involved in their production, conversion and clearance. Apolipoproteins are amphipathic molecules that interact both with lipids of the lipoprotein particle core and the aqueous environment of the plasma. As such, APOE associates with chylomicrons, chylomicron remnants, very low density lipoproteins (VLDL) and intermediate density lipoproteins (IDL) but shows a preferential binding to high-density lipoproteins (HDL). It also binds a wide range of cellular receptors including the LDL receptor/LDLR and the very low-density lipoprotein receptor/VLDLR that mediate the cellular uptake of the APOE-containing lipoprotein particles. Finally, APOE also has a heparin-binding activity and binds heparan-sulfate proteoglycans on the surface of cells, a property that supports the capture and the receptor-mediated uptake of APOE-containing lipoproteins by cells. The protein is Apolipoprotein E (APOE) of Heterocephalus glaber (Naked mole rat).